A 472-amino-acid polypeptide reads, in one-letter code: UDP-N-acetylmuramate--L-alanine ligase (472 aa).

Gly121–Thr127 serves as a coordination point for ATP.

It belongs to the MurCDEF family.

Its subcellular location is the cytoplasm. It carries out the reaction UDP-N-acetyl-alpha-D-muramate + L-alanine + ATP = UDP-N-acetyl-alpha-D-muramoyl-L-alanine + ADP + phosphate + H(+). Its pathway is cell wall biogenesis; peptidoglycan biosynthesis. Functionally, cell wall formation. In Hahella chejuensis (strain KCTC 2396), this protein is UDP-N-acetylmuramate--L-alanine ligase.